We begin with the raw amino-acid sequence, 331 residues long: D-alanine--D-alanine ligase (331 aa).

The ATP-grasp domain occupies Lys122–Glu328. Ala152–Glu207 provides a ligand contact to ATP. Mg(2+)-binding residues include Asp282, Glu295, and Asn297.

Belongs to the D-alanine--D-alanine ligase family. It depends on Mg(2+) as a cofactor. Requires Mn(2+) as cofactor.

The protein localises to the cytoplasm. The enzyme catalyses 2 D-alanine + ATP = D-alanyl-D-alanine + ADP + phosphate + H(+). It participates in cell wall biogenesis; peptidoglycan biosynthesis. Functionally, cell wall formation. In Vibrio vulnificus (strain YJ016), this protein is D-alanine--D-alanine ligase.